Here is a 603-residue protein sequence, read N- to C-terminus: DNA mismatch repair protein MutL (603 aa).

Residues 361 to 383 (KETPTLFSKPTIPEYVPSDEDAP) are disordered.

This sequence belongs to the DNA mismatch repair MutL/HexB family.

This protein is involved in the repair of mismatches in DNA. It is required for dam-dependent methyl-directed DNA mismatch repair. May act as a 'molecular matchmaker', a protein that promotes the formation of a stable complex between two or more DNA-binding proteins in an ATP-dependent manner without itself being part of a final effector complex. This Listeria monocytogenes serotype 4b (strain CLIP80459) protein is DNA mismatch repair protein MutL.